Here is a 253-residue protein sequence, read N- to C-terminus: DnaJ homolog subfamily C member 8 (253 aa).

Position 2 is an N-acetylalanine (alanine 2). Serine 35 carries the post-translational modification Phosphoserine. The region spanning 57-124 (NPFEVLQIDP…QKKRALDVIQ (68 aa)) is the J domain. The residue at position 146 (lysine 146) is an N6-acetyllysine. A compositionally biased stretch (basic and acidic residues) spans 181-222 (EAKEMHERKRQREEEIEAQEKAKREREWQKNFEESRDGRVDS). The disordered stretch occupies residues 181–253 (EAKEMHERKR…PPKVKMEQRE (73 aa)). 2 consecutive short sequence motifs (nuclear localization signal) follow at residues 189-192 (KRQR) and 203-206 (KRER). The residue at position 222 (serine 222) is a Phosphoserine. A compositionally biased stretch (basic residues) spans 231 to 240 (KGKKEKKNRT). An essential for polyglutamine aggregation suppression region spans residues 232 to 253 (GKKEKKNRTFLRPPKVKMEQRE).

Interacts with SRPK1. Interacts with HSP70 (HSPA1A or HSPA1B).

The protein localises to the nucleus. Suppresses polyglutamine (polyQ) aggregation of ATXN3 in neuronal cells. The sequence is that of DnaJ homolog subfamily C member 8 (Dnajc8) from Mus musculus (Mouse).